We begin with the raw amino-acid sequence, 245 residues long: 3-deoxy-manno-octulosonate cytidylyltransferase (245 aa).

It belongs to the KdsB family.

It localises to the cytoplasm. The enzyme catalyses 3-deoxy-alpha-D-manno-oct-2-ulosonate + CTP = CMP-3-deoxy-beta-D-manno-octulosonate + diphosphate. The protein operates within nucleotide-sugar biosynthesis; CMP-3-deoxy-D-manno-octulosonate biosynthesis; CMP-3-deoxy-D-manno-octulosonate from 3-deoxy-D-manno-octulosonate and CTP: step 1/1. It functions in the pathway bacterial outer membrane biogenesis; lipopolysaccharide biosynthesis. Functionally, activates KDO (a required 8-carbon sugar) for incorporation into bacterial lipopolysaccharide in Gram-negative bacteria. The polypeptide is 3-deoxy-manno-octulosonate cytidylyltransferase (Rhodopseudomonas palustris (strain ATCC BAA-98 / CGA009)).